Reading from the N-terminus, the 305-residue chain is PI-PLC X domain-containing protein 2 (305 aa).

The PI-PLC X-box domain occupies 42-215 (HLHNLPLSNL…NCQVLIFYHC (174 aa)). Residues histidine 57 and histidine 132 contribute to the active site.

Widely expressed.

The protein localises to the nucleus. The catalysed reaction is a 1,2-diacyl-sn-glycero-3-phospho-(1D-myo-inositol) + H2O = 1D-myo-inositol 1-phosphate + a 1,2-diacyl-sn-glycerol + H(+). Functionally, catalyzes the hydrolysis of inositol from phosphatidylinositol (1,2-diacyl-sn-glycero-3-phospho-(1D-myo-inositol), PI). Could also hydrolyze various multi-phosphorylated derivatives of PI, such as phosphatidylinositol-4,5 bisphosphate (PIP2), releasing inositol-1,4,5-trisphosphate (IP3) and the protein kinase C activator diacylglycerol (DAG), therefore mediating cell signaling. The polypeptide is PI-PLC X domain-containing protein 2 (PLCXD2) (Homo sapiens (Human)).